A 54-amino-acid polypeptide reads, in one-letter code: uncharacterized protein (54 aa).

A compositionally biased stretch (basic and acidic residues) spans 1–28 (MDRKKDEIQRKYREQMREKKEREKEDGS). The interval 1–29 (MDRKKDEIQRKYREQMREKKEREKEDGSS) is disordered. The helical transmembrane segment at 31–51 (TFEIVVVLAIIILMFFFNSVF) threads the bilayer.

The protein resides in the cell membrane. This is an uncharacterized protein from Bacillus subtilis (strain 168).